The primary structure comprises 494 residues: Cytochrome P450 2A7 (494 aa).

Residue Cys439 coordinates heme.

It belongs to the cytochrome P450 family. Requires heme as cofactor.

It localises to the endoplasmic reticulum membrane. The protein resides in the microsome membrane. The enzyme catalyses an organic molecule + reduced [NADPH--hemoprotein reductase] + O2 = an alcohol + oxidized [NADPH--hemoprotein reductase] + H2O + H(+). Functionally, cytochromes P450 are a group of heme-thiolate monooxygenases. In liver microsomes, this enzyme is involved in an NADPH-dependent electron transport pathway. It oxidizes a variety of structurally unrelated compounds, including steroids, fatty acids, and xenobiotics. The protein is Cytochrome P450 2A7 (CYP2A7) of Homo sapiens (Human).